We begin with the raw amino-acid sequence, 173 residues long: ATP synthase subunit b (173 aa).

The chain crosses the membrane as a helical span at residues 12-32 (LDVNPGLVVWTLITFLVVVLV).

It belongs to the ATPase B chain family. As to quaternary structure, F-type ATPases have 2 components, F(1) - the catalytic core - and F(0) - the membrane proton channel. F(1) has five subunits: alpha(3), beta(3), gamma(1), delta(1), epsilon(1). F(0) has three main subunits: a(1), b(2) and c(10-14). The alpha and beta chains form an alternating ring which encloses part of the gamma chain. F(1) is attached to F(0) by a central stalk formed by the gamma and epsilon chains, while a peripheral stalk is formed by the delta and b chains.

The protein localises to the cell inner membrane. Its function is as follows. F(1)F(0) ATP synthase produces ATP from ADP in the presence of a proton or sodium gradient. F-type ATPases consist of two structural domains, F(1) containing the extramembraneous catalytic core and F(0) containing the membrane proton channel, linked together by a central stalk and a peripheral stalk. During catalysis, ATP synthesis in the catalytic domain of F(1) is coupled via a rotary mechanism of the central stalk subunits to proton translocation. Functionally, component of the F(0) channel, it forms part of the peripheral stalk, linking F(1) to F(0). The polypeptide is ATP synthase subunit b (Leptospira borgpetersenii serovar Hardjo-bovis (strain JB197)).